Here is a 75-residue protein sequence, read N- to C-terminus: Tautomerase PptA (75 aa).

The Proton acceptor; via imino nitrogen role is filled by Pro-2.

This sequence belongs to the 4-oxalocrotonate tautomerase family. PptA subfamily. Homodimer.

Its subcellular location is the cytoplasm. The protein is Tautomerase PptA of Klebsiella pneumoniae (strain 342).